Reading from the N-terminus, the 332-residue chain is T-cell surface glycoprotein CD1c3 (332 aa).

The first 17 residues, 1–17 (MLFLQFLFLDVVLGGSI), serve as a signal peptide directing secretion. Topologically, residues 18-300 (TKNVVQENIS…IILYWGHGLS (283 aa)) are extracellular. Residues asparagine 25, asparagine 38, asparagine 75, and asparagine 146 are each glycosylated (N-linked (GlcNAc...) asparagine). 2 disulfide bridges follow: cysteine 120-cysteine 184 and cysteine 224-cysteine 279. Positions 205 to 292 (PEVWLSSSPN…HSSLRDQDII (88 aa)) constitute an Ig-like domain. Residues 301 to 321 (VILITFAVIVPLVLLIILVLL) form a helical membrane-spanning segment. Topologically, residues 322-332 (CKKCCTYQGIP) are cytoplasmic.

In terms of assembly, heterodimer with B2M (beta-2-microglobulin).

Its subcellular location is the cell membrane. It localises to the endosome membrane. Functionally, antigen-presenting protein that binds self and non-self lipid and glycolipid antigens and presents them to T-cell receptors on natural killer T-cells. This Cavia porcellus (Guinea pig) protein is T-cell surface glycoprotein CD1c3 (CD1C3).